We begin with the raw amino-acid sequence, 364 residues long: Dual-specificity RNA methyltransferase RlmN (364 aa).

E91 functions as the Proton acceptor in the catalytic mechanism. Residues 102–337 enclose the Radical SAM core domain; it reads GTLRITQCLS…AIIRKSKGQD (236 aa). The cysteines at positions 109 and 342 are disulfide-linked. [4Fe-4S] cluster is bound by residues C116, C120, and C123. Residues 169–170, S201, 223–225, and N299 each bind S-adenosyl-L-methionine; these read GE and SLH. The active-site S-methylcysteine intermediate is C342.

The protein belongs to the radical SAM superfamily. RlmN family. The cofactor is [4Fe-4S] cluster.

The protein localises to the cytoplasm. It carries out the reaction adenosine(2503) in 23S rRNA + 2 reduced [2Fe-2S]-[ferredoxin] + 2 S-adenosyl-L-methionine = 2-methyladenosine(2503) in 23S rRNA + 5'-deoxyadenosine + L-methionine + 2 oxidized [2Fe-2S]-[ferredoxin] + S-adenosyl-L-homocysteine. It catalyses the reaction adenosine(37) in tRNA + 2 reduced [2Fe-2S]-[ferredoxin] + 2 S-adenosyl-L-methionine = 2-methyladenosine(37) in tRNA + 5'-deoxyadenosine + L-methionine + 2 oxidized [2Fe-2S]-[ferredoxin] + S-adenosyl-L-homocysteine. Functionally, specifically methylates position 2 of adenine 2503 in 23S rRNA and position 2 of adenine 37 in tRNAs. m2A2503 modification seems to play a crucial role in the proofreading step occurring at the peptidyl transferase center and thus would serve to optimize ribosomal fidelity. The chain is Dual-specificity RNA methyltransferase RlmN from Nitratidesulfovibrio vulgaris (strain ATCC 29579 / DSM 644 / CCUG 34227 / NCIMB 8303 / VKM B-1760 / Hildenborough) (Desulfovibrio vulgaris).